The primary structure comprises 348 residues: Matrix protein (348 aa).

The short motif at 50–53 (YLDL) is the YLDL motif element. Ser70 bears the Phosphoserine; by host mark.

It belongs to the morbillivirus/respirovirus/rubulavirus M protein family. In terms of assembly, homomultimer. Binds to the cytoplasmic regions of F and HN proteins. Interacts with nucleocapsid. Interacts with human alpha-tubulin and beta-tubulin. Interacts with host ANP32B. Post-translationally, a large portion is phosphorylated in the cytoplasm, but not in virion. However, this phosphorylation is not essential for virus replication.

The protein localises to the virion. The protein resides in the host cytoplasm. Its subcellular location is the host cell membrane. In terms of biological role, plays a crucial role in virion assembly and budding. Forms a shell at the inner face of the plasma membrane and concentrates the HN and F glycoproteins. Acts as a negative regulator for transcription and replication by sticking to the nucleocapsid. This effect might be regulated by the cytoplasmic interaction with tubulin that dissociates the M protein from the nucleocapsid. In Cavia cutleri (Guinea pig), this protein is Matrix protein (M).